Consider the following 165-residue polypeptide: Protein SprT (165 aa).

In terms of domain architecture, SprT-like spans 10-158; that stretch reads EACYRQAEHF…CRRCKATLVF (149 aa). H69 is a Zn(2+) binding site. E70 is a catalytic residue. Zn(2+) is bound at residue H73.

Belongs to the SprT family. Zn(2+) serves as cofactor.

It is found in the cytoplasm. The chain is Protein SprT from Pseudomonas aeruginosa (strain LESB58).